The sequence spans 139 residues: Large ribosomal subunit protein uL16 (139 aa).

Belongs to the universal ribosomal protein uL16 family. As to quaternary structure, part of the 50S ribosomal subunit.

Binds 23S rRNA and is also seen to make contacts with the A and possibly P site tRNAs. The sequence is that of Large ribosomal subunit protein uL16 from Microcystis aeruginosa (strain NIES-843 / IAM M-2473).